The primary structure comprises 152 residues: Large ribosomal subunit protein bL9 (152 aa).

This sequence belongs to the bacterial ribosomal protein bL9 family.

Its function is as follows. Binds to the 23S rRNA. The sequence is that of Large ribosomal subunit protein bL9 from Nostoc sp. (strain PCC 7120 / SAG 25.82 / UTEX 2576).